The chain runs to 645 residues: 1,4-alpha-glucan branching enzyme GlgB (645 aa).

The active-site Nucleophile is the aspartate 309. Residue glutamate 352 is the Proton donor of the active site. The segment at 619-645 (VKTRKGSKKQDGSKTKVRSNVTSRGKR) is disordered. Residues 636 to 645 (RSNVTSRGKR) show a composition bias toward polar residues.

The protein belongs to the glycosyl hydrolase 13 family. GlgB subfamily. As to quaternary structure, monomer.

It catalyses the reaction Transfers a segment of a (1-&gt;4)-alpha-D-glucan chain to a primary hydroxy group in a similar glucan chain.. The protein operates within glycan biosynthesis; glycogen biosynthesis. Functionally, catalyzes the formation of the alpha-1,6-glucosidic linkages in glycogen by scission of a 1,4-alpha-linked oligosaccharide from growing alpha-1,4-glucan chains and the subsequent attachment of the oligosaccharide to the alpha-1,6 position. The sequence is that of 1,4-alpha-glucan branching enzyme GlgB from Bacillus cereus (strain AH187).